The chain runs to 110 residues: Nucleoid-associated protein Mvan_5528 (110 aa).

The protein belongs to the YbaB/EbfC family. In terms of assembly, homodimer.

It is found in the cytoplasm. The protein resides in the nucleoid. Its function is as follows. Binds to DNA and alters its conformation. May be involved in regulation of gene expression, nucleoid organization and DNA protection. This chain is Nucleoid-associated protein Mvan_5528, found in Mycolicibacterium vanbaalenii (strain DSM 7251 / JCM 13017 / BCRC 16820 / KCTC 9966 / NRRL B-24157 / PYR-1) (Mycobacterium vanbaalenii).